A 212-amino-acid polypeptide reads, in one-letter code: Pyridoxine/pyridoxamine 5'-phosphate oxidase (212 aa).

Substrate is bound by residues 7 to 10 and lysine 66; that span reads RREY. Residues 61-66, 76-77, arginine 82, lysine 83, and glutamine 105 each bind FMN; these read RIVLLK and YT. Substrate is bound by residues tyrosine 123, arginine 127, and serine 131. Residues 140-141 and tryptophan 185 contribute to the FMN site; that span reads QS. 191-193 is a binding site for substrate; that stretch reads RLH. Arginine 195 contacts FMN.

It belongs to the pyridoxamine 5'-phosphate oxidase family. In terms of assembly, homodimer. FMN is required as a cofactor.

The enzyme catalyses pyridoxamine 5'-phosphate + O2 + H2O = pyridoxal 5'-phosphate + H2O2 + NH4(+). The catalysed reaction is pyridoxine 5'-phosphate + O2 = pyridoxal 5'-phosphate + H2O2. It functions in the pathway cofactor metabolism; pyridoxal 5'-phosphate salvage; pyridoxal 5'-phosphate from pyridoxamine 5'-phosphate: step 1/1. The protein operates within cofactor metabolism; pyridoxal 5'-phosphate salvage; pyridoxal 5'-phosphate from pyridoxine 5'-phosphate: step 1/1. Its function is as follows. Catalyzes the oxidation of either pyridoxine 5'-phosphate (PNP) or pyridoxamine 5'-phosphate (PMP) into pyridoxal 5'-phosphate (PLP). In Hahella chejuensis (strain KCTC 2396), this protein is Pyridoxine/pyridoxamine 5'-phosphate oxidase.